Reading from the N-terminus, the 266-residue chain is Undecaprenyl-diphosphatase 3 (266 aa).

A run of 8 helical transmembrane segments spans residues 4-24 (IEAF…FLPI), 43-63 (SGRA…CWLY), 86-106 (FSVL…VDFI), 109-129 (VLFS…IIFW), 145-165 (ITFK…IPGT), 186-206 (TEFS…YDLL), 219-239 (NIGL…KALV), and 246-266 (TLRV…FVML).

Belongs to the UppP family.

Its subcellular location is the cell inner membrane. It carries out the reaction di-trans,octa-cis-undecaprenyl diphosphate + H2O = di-trans,octa-cis-undecaprenyl phosphate + phosphate + H(+). Catalyzes the dephosphorylation of undecaprenyl diphosphate (UPP). Confers resistance to bacitracin. This Acinetobacter baylyi (strain ATCC 33305 / BD413 / ADP1) protein is Undecaprenyl-diphosphatase 3.